Here is a 345-residue protein sequence, read N- to C-terminus: MSKQSLSYKDAGVDINAGNALVEKIKADVKRTTRPEVIGGLGGFGALCAIPTKYKEPILVSGTDGVGTKLRLAIDLNRHDSIGIDLVAMCVNDLVVQGAEPLFFLDYYATGKLDVDVAASVIKGIANGCEQSGCALVGGETAEMPGMYHAGDYDLAGFCVGVVEKSDIIDGSKVRVGDVLIALGSSGPHSNGYSLIRKVIEVAGINPAEEQLAGKPLADQVLAPTKIYVKSILQLIKHADVHAICHLTGGGFWENIPRVLPKNVKAVIDESSWEWQPVFKWLQEKGNIDTHEMYRTFNCGVGMIIALPQEDVDTALGLLKQTGEKAWVIGQIEHATDGEEQVIIR.

The protein belongs to the AIR synthase family.

It is found in the cytoplasm. The catalysed reaction is 2-formamido-N(1)-(5-O-phospho-beta-D-ribosyl)acetamidine + ATP = 5-amino-1-(5-phospho-beta-D-ribosyl)imidazole + ADP + phosphate + H(+). The protein operates within purine metabolism; IMP biosynthesis via de novo pathway; 5-amino-1-(5-phospho-D-ribosyl)imidazole from N(2)-formyl-N(1)-(5-phospho-D-ribosyl)glycinamide: step 2/2. In Pasteurella multocida (strain Pm70), this protein is Phosphoribosylformylglycinamidine cyclo-ligase.